Here is a 79-residue protein sequence, read N- to C-terminus: Short neurotoxin 7 (79 aa).

Positions M1 to T21 are cleaved as a signal peptide. 4 disulfides stabilise this stretch: C24–C41, C34–C59, C63–C71, and C72–C77.

It belongs to the three-finger toxin family. Short-chain subfamily. Type III alpha-neurotoxin sub-subfamily. As to expression, expressed by the venom gland.

The protein resides in the secreted. Binds with high affinity to muscle nicotinic acetylcholine receptor (nAChR) and hinders acetylcholine binding to the receptor, thereby impairing neuromuscular transmission. Competes with the binding of alpha-bungarotoxin on muscle AChR (from Torpedo) (IC(50)=0.30 uM). In vivo, causes muscle paralysis, spasms and increased respiration. The protein is Short neurotoxin 7 of Pseudonaja textilis (Eastern brown snake).